A 502-amino-acid chain; its full sequence is Hexokinase-2 (502 aa).

A helical transmembrane segment spans residues 4–24 (VAVATTVVCSVAVCAAAALIV). The region spanning 35–487 (ARVIEILKAF…SGVGAALLAA (453 aa)) is the Hexokinase domain. Residues 90-228 (SGDETGFFYA…GLDMLVAALV (139 aa)) form a hexokinase small subdomain region. Positions 104, 105, and 106 each coordinate ADP. Residues T194, K195, N229, and D230 each contribute to the D-glucose site. Residues 229–476 (NDTIGTLAGG…ESVEVILSND (248 aa)) are hexokinase large subdomain. T253 is an ADP binding site. 3 residues coordinate D-glucose: N256, E284, and E315. G441 is a binding site for ADP.

It belongs to the hexokinase family. Highly expressed in siliques, at intermediate levels in roots and flowers, and at lower levels in stems, rosette and cauline leaves.

It is found in the mitochondrion outer membrane. The catalysed reaction is a D-hexose + ATP = a D-hexose 6-phosphate + ADP + H(+). It carries out the reaction D-fructose + ATP = D-fructose 6-phosphate + ADP + H(+). It catalyses the reaction D-glucose + ATP = D-glucose 6-phosphate + ADP + H(+). Its pathway is carbohydrate metabolism; hexose metabolism. The protein operates within carbohydrate degradation; glycolysis; D-glyceraldehyde 3-phosphate and glycerone phosphate from D-glucose: step 1/4. In terms of biological role, fructose and glucose phosphorylating enzyme. May be involved in the phosphorylation of glucose during the export from mitochondrion to cytosol. Acts as a sugar sensor which may regulate sugar-dependent gene repression or activation. Mediates the effects of sugar on plant growth and development independently of its catalytic activity or the sugar metabolism. May regulate the execution of program cell death in plant cells. This chain is Hexokinase-2 (HXK2), found in Arabidopsis thaliana (Mouse-ear cress).